The primary structure comprises 239 residues: Uridylate kinase (239 aa).

K10–G13 contacts ATP. G52 serves as a coordination point for UMP. The ATP site is built by G53 and R57. UMP is bound by residues D72 and T133 to T140. ATP-binding residues include T160, Y166, and D169.

It belongs to the UMP kinase family. As to quaternary structure, homohexamer.

The protein localises to the cytoplasm. It carries out the reaction UMP + ATP = UDP + ADP. It participates in pyrimidine metabolism; CTP biosynthesis via de novo pathway; UDP from UMP (UMPK route): step 1/1. With respect to regulation, inhibited by UTP. In terms of biological role, catalyzes the reversible phosphorylation of UMP to UDP. The polypeptide is Uridylate kinase (Porphyromonas gingivalis (strain ATCC BAA-308 / W83)).